A 460-amino-acid polypeptide reads, in one-letter code: Flavin-containing monooxygenase FMO GS-OX-like 9 (460 aa).

FAD is bound at residue 20–25; sequence GAGPAG. Residue 222 to 227 participates in NADP(+) binding; the sequence is GNSMSG.

Belongs to the FMO family. FAD is required as a cofactor.

In terms of biological role, catalyzes the conversion of methylthioalkyl glucosinolates of any chain length into methylsulfinylalkyl glucosinolates. This Arabidopsis thaliana (Mouse-ear cress) protein is Flavin-containing monooxygenase FMO GS-OX-like 9.